We begin with the raw amino-acid sequence, 92 residues long: Small ribosomal subunit protein uS19 (92 aa).

Belongs to the universal ribosomal protein uS19 family.

Protein S19 forms a complex with S13 that binds strongly to the 16S ribosomal RNA. This is Small ribosomal subunit protein uS19 from Vibrio parahaemolyticus serotype O3:K6 (strain RIMD 2210633).